Consider the following 272-residue polypeptide: Tryptophan synthase alpha chain (272 aa).

Active-site proton acceptor residues include glutamate 49 and glutamate 60.

It belongs to the TrpA family. Tetramer of two alpha and two beta chains.

It catalyses the reaction (1S,2R)-1-C-(indol-3-yl)glycerol 3-phosphate + L-serine = D-glyceraldehyde 3-phosphate + L-tryptophan + H2O. Its pathway is amino-acid biosynthesis; L-tryptophan biosynthesis; L-tryptophan from chorismate: step 5/5. The alpha subunit is responsible for the aldol cleavage of indoleglycerol phosphate to indole and glyceraldehyde 3-phosphate. The chain is Tryptophan synthase alpha chain from Legionella pneumophila (strain Paris).